We begin with the raw amino-acid sequence, 172 residues long: Inorganic pyrophosphatase (172 aa).

Residues lysine 26, arginine 40, and tyrosine 52 each coordinate substrate. Mg(2+) is bound by residues aspartate 62, aspartate 67, and aspartate 99. Tyrosine 138 contributes to the substrate binding site.

The protein belongs to the PPase family. In terms of assembly, homohexamer. It depends on Mg(2+) as a cofactor.

It is found in the cytoplasm. The enzyme catalyses diphosphate + H2O = 2 phosphate + H(+). Catalyzes the hydrolysis of inorganic pyrophosphate (PPi) forming two phosphate ions. The protein is Inorganic pyrophosphatase of Saccharolobus solfataricus (strain ATCC 35092 / DSM 1617 / JCM 11322 / P2) (Sulfolobus solfataricus).